Reading from the N-terminus, the 360-residue chain is N5-carboxyaminoimidazole ribonucleotide synthase (360 aa).

Residues Arg-98, Lys-138, 143 to 149, 173 to 176, Glu-181, His-204, and 255 to 256 each bind ATP; these read GYDGKGQ, EGFV, and NE. One can recognise an ATP-grasp domain in the interval 102-285; the sequence is KSMFKDLGIP…QFENHLRAVA (184 aa).

This sequence belongs to the PurK/PurT family. As to quaternary structure, homodimer.

The enzyme catalyses 5-amino-1-(5-phospho-beta-D-ribosyl)imidazole + hydrogencarbonate + ATP = 5-carboxyamino-1-(5-phospho-D-ribosyl)imidazole + ADP + phosphate + 2 H(+). It participates in purine metabolism; IMP biosynthesis via de novo pathway; 5-amino-1-(5-phospho-D-ribosyl)imidazole-4-carboxylate from 5-amino-1-(5-phospho-D-ribosyl)imidazole (N5-CAIR route): step 1/2. In terms of biological role, catalyzes the ATP-dependent conversion of 5-aminoimidazole ribonucleotide (AIR) and HCO(3)(-) to N5-carboxyaminoimidazole ribonucleotide (N5-CAIR). The protein is N5-carboxyaminoimidazole ribonucleotide synthase of Pseudomonas aeruginosa (strain ATCC 15692 / DSM 22644 / CIP 104116 / JCM 14847 / LMG 12228 / 1C / PRS 101 / PAO1).